Consider the following 1040-residue polypeptide: Multidrug resistance protein MdtB (1040 aa).

12 helical membrane passes run 16 to 36 (FIMR…AGII), 347 to 367 (LMMA…NIPA), 369 to 389 (IIPG…MVFL), 396 to 416 (LTLM…IVVI), 440 to 460 (IGFT…PLLF), 472 to 492 (FAIT…TLTP), 537 to 557 (WLTL…WVFI), 863 to 883 (LGST…VLGI), 888 to 908 (FIHP…ALLA), 911 to 931 (IAGS…IGIV), 968 to 988 (ILMT…STGV), and 998 to 1018 (IGMV…TPVI).

This sequence belongs to the resistance-nodulation-cell division (RND) (TC 2.A.6) family. MdtB subfamily. As to quaternary structure, part of a tripartite efflux system composed of MdtA, MdtB and MdtC. MdtB forms a heteromultimer with MdtC.

The protein localises to the cell inner membrane. The MdtABC tripartite complex confers resistance against novobiocin and deoxycholate. The chain is Multidrug resistance protein MdtB from Escherichia coli (strain SE11).